A 418-amino-acid chain; its full sequence is AP-3 complex subunit mu-1 (418 aa).

The region spanning 176 to 417 (NNEAYFDVVE…VTKAGKFQVR (242 aa)) is the MHD domain.

The protein belongs to the adaptor complexes medium subunit family. Adaptor protein complex 3 (AP-3) is a heterotetramer composed of two large adaptins (delta-type subunit AP3D1 and beta-type subunit AP3B1 or AP3B2), a medium adaptin (mu-type subunit AP3M1 or AP3M2) and a small adaptin (sigma-type subunit APS1 or AP3S2). Interacts with AGAP1. AP-3 associates with the BLOC-1 complex.

The protein localises to the golgi apparatus. It is found in the cytoplasmic vesicle membrane. Its function is as follows. Part of the AP-3 complex, an adaptor-related complex which is not clathrin-associated. The complex is associated with the Golgi region as well as more peripheral structures. It facilitates the budding of vesicles from the Golgi membrane and may be directly involved in trafficking to lysosomes. In concert with the BLOC-1 complex, AP-3 is required to target cargos into vesicles assembled at cell bodies for delivery into neurites and nerve terminals. In Bos taurus (Bovine), this protein is AP-3 complex subunit mu-1 (AP3M1).